A 151-amino-acid polypeptide reads, in one-letter code: UPF0102 protein Ava_4800 (151 aa).

The protein belongs to the UPF0102 family.

This Trichormus variabilis (strain ATCC 29413 / PCC 7937) (Anabaena variabilis) protein is UPF0102 protein Ava_4800.